The chain runs to 1995 residues: uncharacterized protein (1995 aa).

Helical transmembrane passes span 31 to 51 (NYTEFGAVFTYFIFSIGEFFK), 53 to 73 (FFSFSFLNNIWSIPIIIPDIA), 106 to 126 (LVIFEKFVIGIINSLFLILPT), 157 to 177 (FLWLASIILGWRFFVIPWLSL), 212 to 232 (IFLLNFLLALTEQSCIYPFIS), 254 to 274 (FLLIHGAYLLGILFGSFSLLQ), and 307 to 327 (ILNFTFLYATMLCAIASIPYY). Disordered regions lie at residues 1418-1441 (SLKKSQIKKRSRHSWKKRSRHQFS) and 1848-1883 (DLRWRPSSRTKQKRKDNTRSSAASKTKSNKRVKTNP). Composition is skewed to basic residues over residues 1422–1441 (SQIKKRSRHSWKKRSRHQFS) and 1853–1863 (PSSRTKQKRKD).

Belongs to the ycf78 family.

It is found in the plastid. Its subcellular location is the chloroplast membrane. In terms of biological role, essential for cell growth. May be involved in binding chloroplast DNA to either the chloroplast envelope or the thylakoid membrane. This is an uncharacterized protein from Chlamydomonas reinhardtii (Chlamydomonas smithii).